Consider the following 403-residue polypeptide: Octaketide synthase 1 (403 aa).

Cysteine 174 is an active-site residue. CoA is bound by residues serine 281 and 318 to 321 (GGRA).

Belongs to the thiolase-like superfamily. Chalcone/stilbene synthases family. Homodimer.

Its pathway is secondary metabolite biosynthesis; flavonoid biosynthesis. Catalyzes the iterative condensations of 8 molecules of malonyl-CoA to produce aromatic octaketides, SEK4 and SEK4b, the products of the minimal polyketide synthase for the benzoisochromanequinone actinorhodin. May be involved in the biosynthesis of the octaketide barbaloin. This Aloe arborescens (Kidachi aloe) protein is Octaketide synthase 1.